Here is a 237-residue protein sequence, read N- to C-terminus: Ribonuclease PH (237 aa).

Residues Arg86 and 124-126 each bind phosphate; that span reads GTR.

The protein belongs to the RNase PH family. As to quaternary structure, homohexameric ring arranged as a trimer of dimers.

It carries out the reaction tRNA(n+1) + phosphate = tRNA(n) + a ribonucleoside 5'-diphosphate. Its function is as follows. Phosphorolytic 3'-5' exoribonuclease that plays an important role in tRNA 3'-end maturation. Removes nucleotide residues following the 3'-CCA terminus of tRNAs; can also add nucleotides to the ends of RNA molecules by using nucleoside diphosphates as substrates, but this may not be physiologically important. Probably plays a role in initiation of 16S rRNA degradation (leading to ribosome degradation) during starvation. The chain is Ribonuclease PH from Erythrobacter litoralis (strain HTCC2594).